Consider the following 434-residue polypeptide: Chaperone SurA (434 aa).

The signal sequence occupies residues 1 to 22 (MKKWKSSLLGIAIWSLAASSMA). 2 consecutive PpiC domains span residues 173 to 274 (TVQF…KVND) and 283 to 383 (VTEV…EVLD).

It localises to the periplasm. It catalyses the reaction [protein]-peptidylproline (omega=180) = [protein]-peptidylproline (omega=0). In terms of biological role, chaperone involved in the correct folding and assembly of outer membrane proteins. Recognizes specific patterns of aromatic residues and the orientation of their side chains, which are found more frequently in integral outer membrane proteins. May act in both early periplasmic and late outer membrane-associated steps of protein maturation. The sequence is that of Chaperone SurA from Photobacterium profundum (strain SS9).